Here is a 264-residue protein sequence, read N- to C-terminus: tRNA pseudouridine synthase A (264 aa).

The Nucleophile role is filled by Asp54. Residue Tyr113 coordinates substrate.

It belongs to the tRNA pseudouridine synthase TruA family. In terms of assembly, homodimer.

It carries out the reaction uridine(38/39/40) in tRNA = pseudouridine(38/39/40) in tRNA. Formation of pseudouridine at positions 38, 39 and 40 in the anticodon stem and loop of transfer RNAs. The protein is tRNA pseudouridine synthase A of Leptospira biflexa serovar Patoc (strain Patoc 1 / Ames).